Consider the following 474-residue polypeptide: mRNA cap guanine-N(7) methyltransferase (474 aa).

Residues 1–12 (MSTDSYTPSQEP) show a composition bias toward polar residues. The disordered stretch occupies residues 1 to 106 (MSTDSYTPSQ…GHEGDEGDED (106 aa)). The segment covering 56-100 (SDIDGKYDKYGERRNAHTTTRDSRLDRLKRVRQKSAEREDVGHEG) has biased composition (basic and acidic residues). The mRNA cap 0 methyltransferase domain occupies 170–474 (SPIYKMRNFN…FYIGFVFEKV (305 aa)). An mRNA-binding site is contributed by 179-180 (NN). S-adenosyl-L-methionine is bound by residues Lys183, Cys207, Asp229, Asp269, Gln299, and Tyr304.

Belongs to the class I-like SAM-binding methyltransferase superfamily. mRNA cap 0 methyltransferase family.

The protein resides in the nucleus. It catalyses the reaction a 5'-end (5'-triphosphoguanosine)-ribonucleoside in mRNA + S-adenosyl-L-methionine = a 5'-end (N(7)-methyl 5'-triphosphoguanosine)-ribonucleoside in mRNA + S-adenosyl-L-homocysteine. Responsible for methylating the 5'-cap structure of mRNAs. The sequence is that of mRNA cap guanine-N(7) methyltransferase (ABD1) from Candida albicans (strain SC5314 / ATCC MYA-2876) (Yeast).